A 107-amino-acid chain; its full sequence is uncharacterized protein (107 aa).

A signal peptide spans Met1 to Ala18.

This is an uncharacterized protein from Caenorhabditis elegans.